The following is a 91-amino-acid chain: MSRTIFCTFLQREAEGQDFQLYPGELGKRIYNEISKEAWAQWQHKQTMLINEKKLNMMNAEHRKLLEQEMVNFLFEGKEVHIEGFTPEDKK.

The protein belongs to the Fe(2+)-trafficking protein family. As to quaternary structure, monomer.

Its function is as follows. Could be a mediator in iron transactions between iron acquisition and iron-requiring processes, such as synthesis and/or repair of Fe-S clusters in biosynthetic enzymes. In Escherichia coli O6:H1 (strain CFT073 / ATCC 700928 / UPEC), this protein is Probable Fe(2+)-trafficking protein.